Consider the following 485-residue polypeptide: Cysteine--tRNA ligase (485 aa).

C28 contributes to the Zn(2+) binding site. Positions 30-40 match the 'HIGH' region motif; sequence MTVYDYCHLGH. Zn(2+) is bound by residues C212, H237, and E241. The short motif at 269–273 is the 'KMSKS' region element; sequence KMSKS. K272 is a binding site for ATP.

This sequence belongs to the class-I aminoacyl-tRNA synthetase family. As to quaternary structure, monomer. Requires Zn(2+) as cofactor.

The protein resides in the cytoplasm. The enzyme catalyses tRNA(Cys) + L-cysteine + ATP = L-cysteinyl-tRNA(Cys) + AMP + diphosphate. This is Cysteine--tRNA ligase from Bordetella bronchiseptica (strain ATCC BAA-588 / NCTC 13252 / RB50) (Alcaligenes bronchisepticus).